The following is a 239-amino-acid chain: MAVVTLSEMMEAGAHFGHQTRRWNPKMSRYIYCARNGVHIIDLVKTAVCMNNAYKWTRSAARSGKRFLFVGTKKQASEVVALEAARCGAAYVNQRWLGGMLTNWTTMKARIDRLKDLERMESSGAIAMRPKKEGAVLRRELERLQKYLGGLKTMRRLPDVVVLVDQRRESNAVLEARKLDIPLVSMLDTNCDPDLCEVPIPCNDDAVRSVQLVLGRLADAINEGRHGSNEQRGGDDYEG.

It belongs to the universal ribosomal protein uS2 family.

The polypeptide is Small ribosomal subunit protein uS2 (Synechococcus sp. (strain CC9902)).